Consider the following 187-residue polypeptide: Methylamine dehydrogenase light chain (187 aa).

Positions 1–57 (MKKDTGFDSKIEKLARTTASKTGRRGFIGRLGGFLVGSALLPLLPVDRRSRLGGEVQ) form a signal peptide, tat-type signal. 6 cysteine pairs are disulfide-bonded: C79–C144, C85–C117, C92–C177, C94–C142, C102–C133, and C134–C165. Position 113 is a tryptophylquinone (W113). The segment at residues 113–164 (WVASCYNPGDQQTYLIAYRDCCGKQTCGRCNCVNTQGELPVYRPEFNNDIVW) is a cross-link (tryptophan tryptophylquinone (Trp-Trp)).

Belongs to the aromatic amine dehydrogenase light chain family. As to quaternary structure, heterotetramer of two light and two heavy chains. Tryptophan tryptophylquinone residue serves as cofactor. In terms of processing, predicted to be exported by the Tat system. The position of the signal peptide cleavage has not been experimentally proven. Tryptophan tryptophylquinone (TTQ) is formed by oxidation of the indole ring of a tryptophan to form tryptophylquinone followed by covalent cross-linking with another tryptophan residue.

The protein localises to the periplasm. It carries out the reaction 2 oxidized [amicyanin] + methylamine + H2O = 2 reduced [amicyanin] + formaldehyde + NH4(+) + 2 H(+). It functions in the pathway one-carbon metabolism; methylamine degradation; formaldehyde from methylamine: step 1/1. Its function is as follows. Methylamine dehydrogenase carries out the oxidation of methylamine. Electrons are passed from methylamine dehydrogenase to amicyanin. The polypeptide is Methylamine dehydrogenase light chain (mauA) (Methylophilus methylotrophus (Bacterium W3A1)).